The following is a 32-amino-acid chain: Photosystem I reaction center subunit XII (32 aa).

Residues 4–26 (ISDSQIIVILLSVFITSILALRL) traverse the membrane as a helical segment.

Belongs to the PsaM family.

The protein resides in the plastid. Its subcellular location is the chloroplast thylakoid membrane. The sequence is that of Photosystem I reaction center subunit XII from Marchantia polymorpha (Common liverwort).